The sequence spans 230 residues: Acyl-protein thioesterase 1 (230 aa).

Catalysis depends on charge relay system residues Ser119, Asp174, and His208. Lys224 is subject to N6-acetyllysine.

The protein belongs to the AB hydrolase superfamily. AB hydrolase 2 family. Homodimer.

Its subcellular location is the cytoplasm. The protein localises to the cell membrane. It is found in the nucleus membrane. The protein resides in the endoplasmic reticulum. The catalysed reaction is S-hexadecanoyl-L-cysteinyl-[protein] + H2O = L-cysteinyl-[protein] + hexadecanoate + H(+). The enzyme catalyses 1-hexadecanoyl-sn-glycero-3-phosphocholine + H2O = sn-glycerol 3-phosphocholine + hexadecanoate + H(+). It carries out the reaction a 1-(9Z-octadecenoyl)-2-acyl-sn-glycero-3-phosphocholine + H2O = a 2-acyl-sn-glycero-3-phosphocholine + (9Z)-octadecenoate + H(+). Acts as an acyl-protein thioesterase. Hydrolyzes fatty acids from S-acylated cysteine residues in proteins such as trimeric G alpha proteins or HRAS. Acts as a palmitoyl thioesterase that catalyzes depalmitoylation of proteins, such as ADRB2, KCNMA1 and SQSTM1. Acts as a negative regulator of autophagy by mediating palmitoylation of SQSTM1, decreasing affinity between SQSTM1 and ATG8 proteins and recruitment of ubiquitinated cargo proteins to autophagosomes. Acts as a lysophospholipase and hydrolyzes lysophosphatidylcholine (lyso-PC). Also hydrolyzes lysophosphatidylethanolamine (lyso-PE), lysophosphatidylinositol (lyso-PI) and lysophosphatidylserine (lyso-PS). Has much higher thioesterase activity than lysophospholipase activity. Contributes to the production of lysophosphatidic acid (LPA) during blood coagulation by recognizing and cleaving plasma phospholipids to generate lysophospholipids which in turn act as substrates for ENPP2 to produce LPA. The polypeptide is Acyl-protein thioesterase 1 (LYPLA1) (Pongo abelii (Sumatran orangutan)).